A 147-amino-acid polypeptide reads, in one-letter code: Large ribosomal subunit protein bL9 (147 aa).

The protein belongs to the bacterial ribosomal protein bL9 family.

Functionally, binds to the 23S rRNA. The chain is Large ribosomal subunit protein bL9 from Halalkalibacterium halodurans (strain ATCC BAA-125 / DSM 18197 / FERM 7344 / JCM 9153 / C-125) (Bacillus halodurans).